We begin with the raw amino-acid sequence, 832 residues long: MVAANLEVPTSSSSSAATKRQKDVDNKLEKCLNDMLKLKTSSNNNSTSNSNNNAIMSHSLTGEHKDPKTALEGPTSSSSSSSSKYIGESQIPVPVQLYDPQKPLLQQQQQQQRICYPIGKSNSTSQLPMGGYQRLLQHQQQQHHQQQQQQHQEQQQYPQHKRPFLNWNSFACSAMNGASDPFMQQQHMPAHQQQQHLPHKLQQSYSSSHVPKQAPKSGLAMFLQKNTNKENKFGQPMQQQPPGMMPQMYGYQAPQQQSKIGYPRTGAPLTHSASFSSAQRPTALQFHQQHQQQQHLQQQQQHPQQQQHQHSSFGVGMMSRNYYNMPKQPERKPLQTFDPYAYPKPNQMQPVKYQQQQQHPHTQFQNASAGGGGGGAAGLQYDPNTNTQLFYASPASSSSNKQPQQPQQQQQQQQSQLQQSNSVIFNHSGQQHQPHQQQQNEMSKSALGLHFIETAKPVIQDDADGHLIYHTGDILHHRYKIMATLGEGTFGRVVKVKDMERDYCMALKIIKNVEKYREAAKLEINALEKIAQKDPHCDHLCVKMIDWFDYHGHMCIVFEMLGLSVFDFLRENNYEPYPLDQVRHMAYQLCYSVKFLHDNRLTHTDLKPENILFVDSDYTSHYNHKINREVRRVKNTDVRLIDFGSATFDHEHHSTIVSTRHYRAPEVILELGWSQPCDVWSIGCILFELYLGITLFQTHDNREHLAMMERILGQIPYRMARNHTLYSKTKTKYFYHGKLDWDEKSSAGRYVRDHCKPLFLCQLSDSEDHCELFSLIKKMLEYEPSSRITLGEALHHPFFDRLPPHHRVGEVSNKQPLSSGSSSRERSHSLSR.

Disordered stretches follow at residues 1–86 (MVAA…SKYI), 135–158 (LLQH…QQYP), 179–215 (SDPF…KQAP), and 258–419 (SKIG…QLQQ). The span at 8-18 (VPTSSSSSAAT) shows a compositional bias: polar residues. The segment covering 20–32 (RQKDVDNKLEKCL) has biased composition (basic and acidic residues). Low complexity-rich tracts occupy residues 40–53 (TSSN…SNNN), 137–158 (QHQQ…QQYP), and 183–203 (MQQQ…KLQQ). Over residues 271-282 (HSASFSSAQRPT) the composition is skewed to polar residues. Composition is skewed to low complexity over residues 285 to 310 (QFHQ…QHQH), 347 to 365 (QMQP…TQFQ), and 396 to 419 (SSSS…QLQQ). One can recognise a Protein kinase domain in the interval 479–799 (YKIMATLGEG…LGEALHHPFF (321 aa)). Residues 485 to 493 (LGEGTFGRV) and Lys508 each bind ATP. Asp605 functions as the Proton acceptor in the catalytic mechanism. A disordered region spans residues 809 to 832 (GEVSNKQPLSSGSSSRERSHSLSR). The span at 823–832 (SRERSHSLSR) shows a compositional bias: basic and acidic residues.

The protein belongs to the protein kinase superfamily. CMGC Ser/Thr protein kinase family. Lammer subfamily. Interacts (via N-terminus) with x16 (via Arg/Ser-rich region). Interacts with eEF1gamma (via C-terminus); the interaction is probably direct, is transient and leads to phosphorylation of eEF1gamma by Doa. Mg(2+) serves as cofactor. In terms of processing, autophosphorylated on serine, threonine and tyrosine residues. Ubiquitous expression in embryos. Stage 17 embryos show elevated expression in CNS and brain. Ubiquitous expression in larval imaginal disks. Increased expression posterior to the eye-antennal disk morphogenetic furrow.

It is found in the cytoplasm. It localises to the cytosol. The protein localises to the nucleus. The enzyme catalyses L-seryl-[protein] + ATP = O-phospho-L-seryl-[protein] + ADP + H(+). It catalyses the reaction L-threonyl-[protein] + ATP = O-phospho-L-threonyl-[protein] + ADP + H(+). It carries out the reaction L-tyrosyl-[protein] + ATP = O-phospho-L-tyrosyl-[protein] + ADP + H(+). Functionally, dual specificity kinase involved in the negative regulation of microtubule-based transport through phsophorylation of the microtuble-binding protein eEF1gamma. May function in the control of alternative splicing by phosphorylating serine/arginine-rich splicing factors, the SR proteins, including x16. Negative regulator of the copia retrotransposon element of the white (w) gene. In the eye, it is required for normal pigmentation, photoreceptor cell development and for organization of interommatidial bristles. Also essential for embryonic segmentation and differentiation of the nervous system. In terms of biological role, may be the specific isoform involved in regulation of microtubule-based transport through phosphorylation of the microtubule binding protein eEF1gamma. This chain is Serine/threonine-protein kinase Doa, found in Drosophila melanogaster (Fruit fly).